The sequence spans 471 residues: Heparan-sulfate 6-O-sulfotransferase 3 (471 aa).

Residues 1 to 4 (MDER) lie on the Cytoplasmic side of the membrane. Residues 5–27 (FNKWLLTPVLTLLFVVIMYQYVS) form a helical; Signal-anchor for type II membrane protein membrane-spanning segment. Residues 28 to 471 (PSCTSSCTNF…EDYNSQVVRW (444 aa)) are Lumenal-facing. Positions 39–122 (EQPRAGEAGP…EAPENGSLPR (84 aa)) are disordered. Over residues 41-62 (PRAGEAGPPAVPGPARRAQAPP) the composition is skewed to low complexity. Over residues 70–81 (QLPPPPRGPPEG) the composition is skewed to pro residues. The segment covering 88–114 (PEEEDEEPGDPREGEEEEEEDEPDPEA) has biased composition (acidic residues). 2 N-linked (GlcNAc...) asparagine glycosylation sites follow: Asn117 and Asn128. 152 to 160 (HIQKTGGTT) is a 3'-phosphoadenylyl sulfate binding site. Substrate contacts are provided by residues 182–183 (KK), Arg199, Trp204, and His209. His209 (proton acceptor) is an active-site residue. Asn231 carries an N-linked (GlcNAc...) asparagine glycan. The 3'-phosphoadenylyl sulfate site is built by Arg245 and Ser253. Substrate is bound by residues His257 and Trp264. N-linked (GlcNAc...) asparagine glycosylation is found at Asn324 and Asn329. 377 to 379 (TQF) contributes to the 3'-phosphoadenylyl sulfate binding site. The N-linked (GlcNAc...) asparagine glycan is linked to Asn380. 383 to 384 (RA) serves as a coordination point for 3'-phosphoadenylyl sulfate. Positions 422–471 (TKQLEHQRDRQKRREERRLQREHRDHQWPKEDGAAEGTVTEDYNSQVVRW) are disordered. A compositionally biased stretch (basic and acidic residues) spans 423 to 454 (KQLEHQRDRQKRREERRLQREHRDHQWPKEDG). Over residues 462–471 (EDYNSQVVRW) the composition is skewed to polar residues.

It belongs to the sulfotransferase 6 family.

It is found in the membrane. The enzyme catalyses alpha-D-glucosaminyl-[heparan sulfate](n) + 3'-phosphoadenylyl sulfate = 6-sulfo-alpha-D-glucosaminyl-[heparan sulfate](n) + adenosine 3',5'-bisphosphate + H(+). 6-O-sulfation enzyme which catalyzes the transfer of sulfate from 3'-phosphoadenosine 5'-phosphosulfate (PAPS) to position 6 of the N-sulfoglucosamine residue (GlcNS) of heparan sulfate. The chain is Heparan-sulfate 6-O-sulfotransferase 3 (HS6ST3) from Homo sapiens (Human).